A 447-amino-acid chain; its full sequence is GTPase Der (447 aa).

EngA-type G domains are found at residues 3 to 167 (PVIA…QLPE) and 180 to 353 (IRLA…KAAT). GTP is bound by residues 9 to 16 (GRPNVGKS), 56 to 60 (DTGGF), 119 to 122 (NKAE), 186 to 193 (GRPNVGKS), 233 to 237 (DTAGL), and 298 to 301 (NKWD). A KH-like domain is found at 353 to 438 (TCKMPTPVLT…PLRIEMKTSR (86 aa)).

Belongs to the TRAFAC class TrmE-Era-EngA-EngB-Septin-like GTPase superfamily. EngA (Der) GTPase family. As to quaternary structure, associates with the 50S ribosomal subunit.

GTPase that plays an essential role in the late steps of ribosome biogenesis. The sequence is that of GTPase Der from Paracidovorax citrulli (strain AAC00-1) (Acidovorax citrulli).